Here is a 272-residue protein sequence, read N- to C-terminus: Shikimate dehydrogenase (NADP(+)) (272 aa).

Residues 14–16 and T61 each bind shikimate; that span reads SKS. K65 (proton acceptor) is an active-site residue. E77 contributes to the NADP(+) binding site. Shikimate contacts are provided by N86 and D102. NADP(+) contacts are provided by residues 126 to 130, 149 to 154, and M213; these read GAGGA and NRTVSR. Y215 contacts shikimate. G237 serves as a coordination point for NADP(+).

It belongs to the shikimate dehydrogenase family. As to quaternary structure, homodimer.

The enzyme catalyses shikimate + NADP(+) = 3-dehydroshikimate + NADPH + H(+). Its pathway is metabolic intermediate biosynthesis; chorismate biosynthesis; chorismate from D-erythrose 4-phosphate and phosphoenolpyruvate: step 4/7. Functionally, involved in the biosynthesis of the chorismate, which leads to the biosynthesis of aromatic amino acids. Catalyzes the reversible NADPH linked reduction of 3-dehydroshikimate (DHSA) to yield shikimate (SA). This Escherichia coli O139:H28 (strain E24377A / ETEC) protein is Shikimate dehydrogenase (NADP(+)).